A 208-amino-acid polypeptide reads, in one-letter code: Putative 3-methyladenine DNA glycosylase (208 aa).

Belongs to the DNA glycosylase MPG family.

The protein is Putative 3-methyladenine DNA glycosylase of Lactobacillus delbrueckii subsp. bulgaricus (strain ATCC 11842 / DSM 20081 / BCRC 10696 / JCM 1002 / NBRC 13953 / NCIMB 11778 / NCTC 12712 / WDCM 00102 / Lb 14).